We begin with the raw amino-acid sequence, 686 residues long: Methionine--tRNA ligase (686 aa).

A 'HIGH' region motif is present at residues 15-25 (PYANGSIHLGH). 4 residues coordinate Zn(2+): Cys146, Cys149, Cys159, and Cys162. The 'KMSKS' region motif lies at 332–336 (KMSKS). ATP is bound at residue Lys335. Residues 550 to 571 (AAAEAAAKEKAEAEKEQASQTE) are disordered. The tRNA-binding domain maps to 585–686 (AFSAVDMRIA…EGAQPGMRVM (102 aa)).

This sequence belongs to the class-I aminoacyl-tRNA synthetase family. MetG type 1 subfamily. Homodimer. Zn(2+) serves as cofactor.

It localises to the cytoplasm. The enzyme catalyses tRNA(Met) + L-methionine + ATP = L-methionyl-tRNA(Met) + AMP + diphosphate. Functionally, is required not only for elongation of protein synthesis but also for the initiation of all mRNA translation through initiator tRNA(fMet) aminoacylation. In Vibrio atlanticus (strain LGP32) (Vibrio splendidus (strain Mel32)), this protein is Methionine--tRNA ligase.